The following is a 531-amino-acid chain: Ultra-long-chain fatty acid omega-hydroxylase (531 aa).

At 1–22 (MLPITDRLLHLLGLEKTAFRIY) the chain is on the lumenal side. A helical membrane pass occupies residues 23 to 43 (AVSTLLLFLLFFLFRLLLRFL). The Cytoplasmic segment spans residues 44–531 (RLCRSFYITC…LKVEPLPPRA (488 aa)). Positions 335 and 475 each coordinate heme.

This sequence belongs to the cytochrome P450 family. Heme serves as cofactor.

Its subcellular location is the endoplasmic reticulum membrane. It is found in the microsome membrane. It catalyses the reaction triacontanoate + reduced [NADPH--hemoprotein reductase] + O2 = omega-hydroxy-triacontanoate + oxidized [NADPH--hemoprotein reductase] + H2O + H(+). The catalysed reaction is an omega-methyl-ultra-long-chain fatty acid + reduced [NADPH--hemoprotein reductase] + O2 = an omega-hydroxy-ultra-long-chain fatty acid + oxidized [NADPH--hemoprotein reductase] + H2O + H(+). Its function is as follows. A cytochrome P450 monooxygenase involved in epidermal ceramide biosynthesis. Hydroxylates the terminal carbon (omega-hydroxylation) of ultra-long-chain fatty acyls (C28-C36) prior to ceramide synthesis. Contributes to the synthesis of three classes of omega-hydroxy-ultra-long chain fatty acylceramides having sphingosine, 6-hydroxysphingosine and phytosphingosine bases, all major lipid components that underlie the permeability barrier of the stratum corneum. Mechanistically, uses molecular oxygen inserting one oxygen atom into a substrate, and reducing the second into a water molecule, with two electrons provided by NADPH via cytochrome P450 reductase (CPR; NADPH-ferrihemoprotein reductase). This is Ultra-long-chain fatty acid omega-hydroxylase from Homo sapiens (Human).